The following is a 658-amino-acid chain: Carnitine O-palmitoyltransferase 2, mitochondrial (658 aa).

Residues 1-25 (MMPRLLLRDWPRCPSLVLGAPSRPL) constitute a mitochondrion transit peptide. Residues 26–178 (SAVSGPAEYL…GLLEPEVFHL (153 aa)) are Mitochondrial matrix-facing. K69 is subject to N6-succinyllysine. An N6-acetyllysine modification is found at K79. K85 is subject to N6-succinyllysine. Positions 179–208 (NPARSDTDAFKRLIRFVPSSLSWYGAYLVN) form an intramembrane region, note=Mitochondrial inner membrane. At 209-658 (AYPLDMSQYF…DALEGKAIKT (450 aa)) the chain is on the mitochondrial matrix side. K239 bears the N6-acetyllysine; alternate mark. K239 bears the N6-succinyllysine; alternate mark. K305 carries the post-translational modification N6-acetyllysine. The active-site Proton acceptor is the H372. K418 is modified (N6-acetyllysine; alternate). The residue at position 418 (K418) is an N6-succinyllysine; alternate. Residues K424 and K439 each carry the N6-succinyllysine modification. 452-464 (GKEFLKKKKLSPD) serves as a coordination point for CoA. Positions 486, 488, and 499 each coordinate (R)-carnitine. An N6-acetyllysine; alternate mark is found at K510 and K544. Residues K510 and K544 each carry the N6-succinyllysine; alternate modification.

It belongs to the carnitine/choline acetyltransferase family.

It localises to the mitochondrion inner membrane. The catalysed reaction is (R)-carnitine + hexadecanoyl-CoA = O-hexadecanoyl-(R)-carnitine + CoA. It carries out the reaction octanoyl-CoA + (R)-carnitine = O-octanoyl-(R)-carnitine + CoA. It catalyses the reaction decanoyl-CoA + (R)-carnitine = O-decanoyl-(R)-carnitine + CoA. The enzyme catalyses dodecanoyl-CoA + (R)-carnitine = O-dodecanoyl-R-carnitine + CoA. The catalysed reaction is tetradecanoyl-CoA + (R)-carnitine = O-tetradecanoyl-(R)-carnitine + CoA. It carries out the reaction (R)-carnitine + octadecanoyl-CoA = O-octadecanoyl-(R)-carnitine + CoA. It catalyses the reaction eicosanoyl-CoA + (R)-carnitine = O-eicosanoyl-(R)-carnitine + CoA. The enzyme catalyses (9Z)-tetradecenoyl-CoA + (R)-carnitine = O-(9Z)-tetradecenoyl-(R)-carnitine + CoA. The catalysed reaction is (5Z)-tetradecenoyl-CoA + (R)-carnitine = O-(5Z)-tetradecenoyl-(R)-carnitine + CoA. It carries out the reaction (R)-carnitine + (9Z)-octadecenoyl-CoA = O-(9Z)-octadecenoyl-(R)-carnitine + CoA. It catalyses the reaction 4,8-dimethylnonanoyl-CoA + (R)-carnitine = O-4,8-dimethylnonanoyl-(R)-carnitine + CoA. The protein operates within lipid metabolism; fatty acid beta-oxidation. Its function is as follows. Involved in the intramitochondrial synthesis of acylcarnitines from accumulated acyl-CoA metabolites. Reconverts acylcarnitines back into the respective acyl-CoA esters that can then undergo beta-oxidation, an essential step for the mitochondrial uptake of long-chain fatty acids and their subsequent beta-oxidation in the mitochondrion. Active with medium (C8-C12) and long-chain (C14-C18) acyl-CoA esters. The protein is Carnitine O-palmitoyltransferase 2, mitochondrial of Mus musculus (Mouse).